Reading from the N-terminus, the 91-residue chain is MARVTVEDAVDAIGNRFDLILVAARRARQIAVGGKRPLVDPENDKPTVIALREIELGLVDSSSMDVIDREEQQHQEAAELAAVAAIVGGNQ.

It belongs to the RNA polymerase subunit omega family. The RNAP catalytic core consists of 2 alpha, 1 beta, 1 beta' and 1 omega subunit. When a sigma factor is associated with the core the holoenzyme is formed, which can initiate transcription.

It catalyses the reaction RNA(n) + a ribonucleoside 5'-triphosphate = RNA(n+1) + diphosphate. Functionally, promotes RNA polymerase assembly. Latches the N- and C-terminal regions of the beta' subunit thereby facilitating its interaction with the beta and alpha subunits. The protein is DNA-directed RNA polymerase subunit omega of Pseudoalteromonas translucida (strain TAC 125).